The following is a 315-amino-acid chain: Transaldolase (315 aa).

The active-site Schiff-base intermediate with substrate is Lys125.

Belongs to the transaldolase family. Type 1 subfamily. In terms of assembly, homodimer.

It is found in the cytoplasm. The enzyme catalyses D-sedoheptulose 7-phosphate + D-glyceraldehyde 3-phosphate = D-erythrose 4-phosphate + beta-D-fructose 6-phosphate. Its pathway is carbohydrate degradation; pentose phosphate pathway; D-glyceraldehyde 3-phosphate and beta-D-fructose 6-phosphate from D-ribose 5-phosphate and D-xylulose 5-phosphate (non-oxidative stage): step 2/3. Functionally, transaldolase is important for the balance of metabolites in the pentose-phosphate pathway. This is Transaldolase from Paracidovorax citrulli (strain AAC00-1) (Acidovorax citrulli).